Here is a 160-residue protein sequence, read N- to C-terminus: UPF0178 protein PLES_56411 (160 aa).

This sequence belongs to the UPF0178 family.

This is UPF0178 protein PLES_56411 from Pseudomonas aeruginosa (strain LESB58).